Here is a 225-residue protein sequence, read N- to C-terminus: Orotate phosphoribosyltransferase (225 aa).

Lysine 29 serves as a coordination point for 5-phospho-alpha-D-ribose 1-diphosphate. An orotate-binding site is contributed by 37–38; that stretch reads FF. Residues 75-76, arginine 101, lysine 102, lysine 105, histidine 107, and 126-134 each bind 5-phospho-alpha-D-ribose 1-diphosphate; these read YK and DDVISAGTS. Orotate-binding residues include serine 130 and arginine 158.

It belongs to the purine/pyrimidine phosphoribosyltransferase family. PyrE subfamily. Homodimer. Mg(2+) is required as a cofactor.

The catalysed reaction is orotidine 5'-phosphate + diphosphate = orotate + 5-phospho-alpha-D-ribose 1-diphosphate. It participates in pyrimidine metabolism; UMP biosynthesis via de novo pathway; UMP from orotate: step 1/2. Catalyzes the transfer of a ribosyl phosphate group from 5-phosphoribose 1-diphosphate to orotate, leading to the formation of orotidine monophosphate (OMP). The polypeptide is Orotate phosphoribosyltransferase (Ralstonia pickettii (strain 12J)).